Reading from the N-terminus, the 279-residue chain is ATP synthase gamma chain (279 aa).

The protein belongs to the ATPase gamma chain family. In terms of assembly, F-type ATPases have 2 components, CF(1) - the catalytic core - and CF(0) - the membrane proton channel. CF(1) has five subunits: alpha(3), beta(3), gamma(1), delta(1), epsilon(1). CF(0) has three main subunits: a, b and c.

Its subcellular location is the cell membrane. In terms of biological role, produces ATP from ADP in the presence of a proton gradient across the membrane. The gamma chain is believed to be important in regulating ATPase activity and the flow of protons through the CF(0) complex. This chain is ATP synthase gamma chain, found in Mycoplasma genitalium (strain ATCC 33530 / DSM 19775 / NCTC 10195 / G37) (Mycoplasmoides genitalium).